The primary structure comprises 182 residues: Adenine phosphoribosyltransferase (182 aa).

This sequence belongs to the purine/pyrimidine phosphoribosyltransferase family. In terms of assembly, homodimer.

It localises to the cytoplasm. The catalysed reaction is AMP + diphosphate = 5-phospho-alpha-D-ribose 1-diphosphate + adenine. It functions in the pathway purine metabolism; AMP biosynthesis via salvage pathway; AMP from adenine: step 1/1. Catalyzes a salvage reaction resulting in the formation of AMP, that is energically less costly than de novo synthesis. This Stutzerimonas stutzeri (strain A1501) (Pseudomonas stutzeri) protein is Adenine phosphoribosyltransferase.